The primary structure comprises 874 residues: Valine--tRNA ligase (874 aa).

Residues 1-22 form a disordered region; that stretch reads MTENSQQPQPAPSTELPTQYTP. The short motif at 57–67 is the 'HIGH' region element; that stretch reads PNVTGSLHLGH. Positions 531 to 535 match the 'KMSKS' region motif; the sequence is KMSKS. Lys534 contributes to the ATP binding site. Positions 805–871 form a coiled coil; that stretch reads VIDFAAERKR…TRITAQLEKL (67 aa).

Belongs to the class-I aminoacyl-tRNA synthetase family. ValS type 1 subfamily. As to quaternary structure, monomer.

The protein resides in the cytoplasm. The catalysed reaction is tRNA(Val) + L-valine + ATP = L-valyl-tRNA(Val) + AMP + diphosphate. In terms of biological role, catalyzes the attachment of valine to tRNA(Val). As ValRS can inadvertently accommodate and process structurally similar amino acids such as threonine, to avoid such errors, it has a 'posttransfer' editing activity that hydrolyzes mischarged Thr-tRNA(Val) in a tRNA-dependent manner. In Streptomyces coelicolor (strain ATCC BAA-471 / A3(2) / M145), this protein is Valine--tRNA ligase.